We begin with the raw amino-acid sequence, 150 residues long: Protein NrdI (150 aa).

Belongs to the NrdI family.

Its function is as follows. Probably involved in ribonucleotide reductase function. The protein is Protein NrdI of Mycobacterium avium (strain 104).